Here is a 279-residue protein sequence, read N- to C-terminus: MALKHFNPTSPGQRGLVLIDRSELHKGRPEKKLVEGLTKSGGRGGNGRIAVRFRGGGAKRLYRLVDFKRRKQGVATVVRLEYDPNRTAFIALIKYQADGELAYILAPQRLKAGDEVVTADKVDVKPGNTSPLRTMPIGTIIHNVELKPAKGGQIARSAGAYAQLVGRDAGYAQIRLNSGELRMVLDTCLATVGAVSNPDHSNQNLGKAGRVRHMGRRPHVRGVAMNPVDHPHGGGEGRTSGGRNPVTPAGKPTKGAKTRVNKATDKFIIRSRHKAKKGR.

The disordered stretch occupies residues 222–264 (GVAMNPVDHPHGGGEGRTSGGRNPVTPAGKPTKGAKTRVNKAT).

This sequence belongs to the universal ribosomal protein uL2 family. Part of the 50S ribosomal subunit. Forms a bridge to the 30S subunit in the 70S ribosome.

Functionally, one of the primary rRNA binding proteins. Required for association of the 30S and 50S subunits to form the 70S ribosome, for tRNA binding and peptide bond formation. It has been suggested to have peptidyltransferase activity; this is somewhat controversial. Makes several contacts with the 16S rRNA in the 70S ribosome. The sequence is that of Large ribosomal subunit protein uL2 from Caulobacter sp. (strain K31).